The sequence spans 322 residues: NADH-quinone oxidoreductase subunit H (322 aa).

8 consecutive transmembrane segments (helical) span residues 12–32 (VGKA…MSFI), 79–99 (IFIL…AVVP), 111–131 (VGLL…LFAG), 151–171 (LSYE…TGSF), 183–203 (LWNV…GVAV), 234–254 (FFVG…TLFF), 262–282 (LPPF…FILL), and 301–321 (VCLP…LINV).

This sequence belongs to the complex I subunit 1 family. NDH-1 is composed of 14 different subunits. Subunits NuoA, H, J, K, L, M, N constitute the membrane sector of the complex.

The protein resides in the cell inner membrane. The enzyme catalyses a quinone + NADH + 5 H(+)(in) = a quinol + NAD(+) + 4 H(+)(out). NDH-1 shuttles electrons from NADH, via FMN and iron-sulfur (Fe-S) centers, to quinones in the respiratory chain. The immediate electron acceptor for the enzyme in this species is believed to be ubiquinone. Couples the redox reaction to proton translocation (for every two electrons transferred, four hydrogen ions are translocated across the cytoplasmic membrane), and thus conserves the redox energy in a proton gradient. This subunit may bind ubiquinone. This Aeromonas salmonicida (strain A449) protein is NADH-quinone oxidoreductase subunit H.